Reading from the N-terminus, the 278-residue chain is Probable endonuclease 4 (278 aa).

Zn(2+) contacts are provided by histidine 69, histidine 109, glutamate 145, aspartate 179, histidine 182, histidine 214, aspartate 227, histidine 229, and glutamate 259.

It belongs to the AP endonuclease 2 family. The cofactor is Zn(2+).

The catalysed reaction is Endonucleolytic cleavage to 5'-phosphooligonucleotide end-products.. Functionally, endonuclease IV plays a role in DNA repair. It cleaves phosphodiester bonds at apurinic or apyrimidinic (AP) sites, generating a 3'-hydroxyl group and a 5'-terminal sugar phosphate. The chain is Probable endonuclease 4 from Phocaeicola vulgatus (strain ATCC 8482 / DSM 1447 / JCM 5826 / CCUG 4940 / NBRC 14291 / NCTC 11154) (Bacteroides vulgatus).